The sequence spans 728 residues: Catalase B (728 aa).

The first 15 residues, 1–15 (MRLTFIPSLIGVANA), serve as a signal peptide directing secretion. Positions 16 to 27 (VCPYMTGELNRR) are excised as a propeptide. H102 is an active-site residue. N120 carries an N-linked (GlcNAc...) asparagine glycan. Residue N175 is part of the active site. Y389 serves as a coordination point for heme. 2 N-linked (GlcNAc...) asparagine glycosylation sites follow: N448 and N551.

It belongs to the catalase family. Homotetramer. Heme serves as cofactor. N-glycosylated.

It is found in the secreted. It catalyses the reaction 2 H2O2 = O2 + 2 H2O. In terms of biological role, occurs in almost all aerobically respiring organisms and serves to protect cells from the toxic effects of hydrogen peroxide. This chain is Catalase B (catB), found in Aspergillus fumigatus (strain ATCC MYA-4609 / CBS 101355 / FGSC A1100 / Af293) (Neosartorya fumigata).